Reading from the N-terminus, the 488-residue chain is UDP-glycosyltransferase 73B1 (488 aa).

Residues Thr-297, 356 to 358 (APQ), 373 to 381 (HCGWNSLLE), and 395 to 398 (GAEQ) each bind UDP-alpha-D-glucose.

This sequence belongs to the UDP-glycosyltransferase family.

Its function is as follows. Possesses low quercetin 3-O-glucosyltransferase and 7-O-glucosyltransferase activities in vitro. This Arabidopsis thaliana (Mouse-ear cress) protein is UDP-glycosyltransferase 73B1 (UGT73B1).